A 236-amino-acid chain; its full sequence is Rab-like protein 3 (236 aa).

The segment at 1 to 235 (MASLDRVKVL…GGGALKNFHC (235 aa)) is small GTPase-like. Residues 16–21 (GVGKSS), 148–150 (KLD), and 179–180 (DC) each bind GTP.

This sequence belongs to the small GTPase superfamily. Rab family. Homodimer. Interacts with GPR89; the interaction stabilizes GPR89. Interacts with RAP1GDS1.

Its function is as follows. Required for KRAS signaling regulation and modulation of cell proliferation. Regulator of KRAS prenylation, and probably prenylation of other small GTPases. Required for lymphocyte development and function. Not required for myeloid cell development. The protein is Rab-like protein 3 (Rabl3) of Mus musculus (Mouse).